Reading from the N-terminus, the 338-residue chain is Phenylalanine--tRNA ligase alpha subunit (338 aa).

Glutamate 252 is a binding site for Mg(2+).

Belongs to the class-II aminoacyl-tRNA synthetase family. Phe-tRNA synthetase alpha subunit type 1 subfamily. As to quaternary structure, tetramer of two alpha and two beta subunits. The cofactor is Mg(2+).

The protein localises to the cytoplasm. It carries out the reaction tRNA(Phe) + L-phenylalanine + ATP = L-phenylalanyl-tRNA(Phe) + AMP + diphosphate + H(+). In Pseudomonas paraeruginosa (strain DSM 24068 / PA7) (Pseudomonas aeruginosa (strain PA7)), this protein is Phenylalanine--tRNA ligase alpha subunit.